The primary structure comprises 80 residues: Large ribosomal subunit protein eL14 (80 aa).

Belongs to the eukaryotic ribosomal protein eL14 family.

In Methanocaldococcus jannaschii (strain ATCC 43067 / DSM 2661 / JAL-1 / JCM 10045 / NBRC 100440) (Methanococcus jannaschii), this protein is Large ribosomal subunit protein eL14.